Consider the following 365-residue polypeptide: Succinate--CoA ligase [ADP-forming] subunit beta (365 aa).

The ATP-grasp domain maps to 9–230; it reads KEIFRAEGIS…EMEEYEPEEF (222 aa). ATP is bound by residues Lys45, 52–54, Glu90, Ile93, and Glu98; that span reads GRG. Mg(2+) is bound by residues Asn190 and Asp203. Substrate-binding positions include Asn244 and 300–302; that span reads GIT.

It belongs to the succinate/malate CoA ligase beta subunit family. Heterotetramer of two alpha and two beta subunits. Mg(2+) serves as cofactor.

The enzyme catalyses succinate + ATP + CoA = succinyl-CoA + ADP + phosphate. It carries out the reaction GTP + succinate + CoA = succinyl-CoA + GDP + phosphate. Its pathway is carbohydrate metabolism; tricarboxylic acid cycle; succinate from succinyl-CoA (ligase route): step 1/1. Its function is as follows. Succinyl-CoA synthetase functions in the citric acid cycle (TCA), coupling the hydrolysis of succinyl-CoA to the synthesis of either ATP or GTP and thus represents the only step of substrate-level phosphorylation in the TCA. The beta subunit provides nucleotide specificity of the enzyme and binds the substrate succinate, while the binding sites for coenzyme A and phosphate are found in the alpha subunit. The chain is Succinate--CoA ligase [ADP-forming] subunit beta from Methanothermobacter thermautotrophicus (strain ATCC 29096 / DSM 1053 / JCM 10044 / NBRC 100330 / Delta H) (Methanobacterium thermoautotrophicum).